Consider the following 131-residue polypeptide: Leptin receptor overlapping transcript-like 1 (131 aa).

The next 4 membrane-spanning stretches (helical) occupy residues 7–27, 32–52, 69–89, and 100–120; these read LISLSFGGAIGLMFLMLGCAL, KYWPLFVLFFYILSPIPYCIA, LAIFLTTGIVVSAFGLPIVFA, and ALVLTGNTVIFATILGFFLVF.

This sequence belongs to the OB-RGRP/VPS55 family. Interacts with RAB13. As to expression, widely expressed, with highest expression in heart, testis, adrenal gland, thymus, and spleen, and lowest expression in lung and skeletal muscle.

It is found in the membrane. Its function is as follows. Negatively regulates growth hormone (GH) receptor cell surface expression in liver. May play a role in liver resistance to GH during periods of reduced nutrient availability. The chain is Leptin receptor overlapping transcript-like 1 (LEPROTL1) from Homo sapiens (Human).